Consider the following 495-residue polypeptide: Ectonucleoside triphosphate diphosphohydrolase 2 (495 aa).

Over 1-4 the chain is Cytoplasmic; it reads MAGK. A helical membrane pass occupies residues 5-25; it reads LVSLVPPLLLAAAGLTGLLLL. Residues 26 to 462 lie on the Extracellular side of the membrane; sequence CVPTQDVREP…PGLRKGTHFS (437 aa). Asn-64 is a glycosylation site (N-linked (GlcNAc...) asparagine). The cysteines at positions 75 and 99 are disulfide-linked. Residue Asn-129 is glycosylated (N-linked (GlcNAc...) asparagine). Glu-165 functions as the Proton acceptor in the catalytic mechanism. 204-208 contributes to the ATP binding site; the sequence is GASTQ. Cystine bridges form between Cys-242-Cys-284 and Cys-265-Cys-310. N-linked (GlcNAc...) asparagine glycosylation is found at Asn-294, Asn-306, and Asn-319. 2 disulfides stabilise this stretch: Cys-323/Cys-328 and Cys-377/Cys-399. 2 N-linked (GlcNAc...) asparagine glycosylation sites follow: Asn-378 and Asn-443. The chain crosses the membrane as a helical span at residues 463-483; it reads SWVALLLLFTVLILAALVLLL. Residues 484-495 lie on the Cytoplasmic side of the membrane; sequence RQVRSAKSPGAL.

It belongs to the GDA1/CD39 NTPase family. Requires Ca(2+) as cofactor. Mg(2+) is required as a cofactor. Expressed in brain, heart, vas deferens, kidney, skeletal muscle, thymus, lung and spleen. Weak expression in liver.

The protein localises to the cell membrane. In the nervous system, could hydrolyze ATP and other nucleotides to regulate purinergic neurotransmission. Hydrolyzes ADP only to a marginal extent. In Rattus norvegicus (Rat), this protein is Ectonucleoside triphosphate diphosphohydrolase 2 (Entpd2).